A 430-amino-acid chain; its full sequence is NADH-quinone oxidoreductase subunit D 1 (430 aa).

Positions 1-36 are disordered; sequence MSEAKGVGGIDPRATPGSAGAGERPPMGTVSRAGDG.

The protein belongs to the complex I 49 kDa subunit family. As to quaternary structure, NDH-1 is composed of 14 different subunits. Subunits NuoB, C, D, E, F, and G constitute the peripheral sector of the complex.

Its subcellular location is the cell inner membrane. The catalysed reaction is a quinone + NADH + 5 H(+)(in) = a quinol + NAD(+) + 4 H(+)(out). NDH-1 shuttles electrons from NADH, via FMN and iron-sulfur (Fe-S) centers, to quinones in the respiratory chain. The immediate electron acceptor for the enzyme in this species is believed to be ubiquinone. Couples the redox reaction to proton translocation (for every two electrons transferred, four hydrogen ions are translocated across the cytoplasmic membrane), and thus conserves the redox energy in a proton gradient. This Anaeromyxobacter dehalogenans (strain 2CP-C) protein is NADH-quinone oxidoreductase subunit D 1.